A 237-amino-acid chain; its full sequence is Thiamine-phosphate synthase (237 aa).

Residues 41–45 (QLRDK) and Asn73 each bind 4-amino-2-methyl-5-(diphosphooxymethyl)pyrimidine. 2 residues coordinate Mg(2+): Asp74 and Asp93. Residue Ser112 coordinates 4-amino-2-methyl-5-(diphosphooxymethyl)pyrimidine. 143 to 145 (TPT) is a 2-[(2R,5Z)-2-carboxy-4-methylthiazol-5(2H)-ylidene]ethyl phosphate binding site. Residue Lys146 participates in 4-amino-2-methyl-5-(diphosphooxymethyl)pyrimidine binding. Gly192 lines the 2-[(2R,5Z)-2-carboxy-4-methylthiazol-5(2H)-ylidene]ethyl phosphate pocket.

This sequence belongs to the thiamine-phosphate synthase family. Mg(2+) serves as cofactor.

It catalyses the reaction 2-[(2R,5Z)-2-carboxy-4-methylthiazol-5(2H)-ylidene]ethyl phosphate + 4-amino-2-methyl-5-(diphosphooxymethyl)pyrimidine + 2 H(+) = thiamine phosphate + CO2 + diphosphate. It carries out the reaction 2-(2-carboxy-4-methylthiazol-5-yl)ethyl phosphate + 4-amino-2-methyl-5-(diphosphooxymethyl)pyrimidine + 2 H(+) = thiamine phosphate + CO2 + diphosphate. The catalysed reaction is 4-methyl-5-(2-phosphooxyethyl)-thiazole + 4-amino-2-methyl-5-(diphosphooxymethyl)pyrimidine + H(+) = thiamine phosphate + diphosphate. Its pathway is cofactor biosynthesis; thiamine diphosphate biosynthesis; thiamine phosphate from 4-amino-2-methyl-5-diphosphomethylpyrimidine and 4-methyl-5-(2-phosphoethyl)-thiazole: step 1/1. In terms of biological role, condenses 4-methyl-5-(beta-hydroxyethyl)thiazole monophosphate (THZ-P) and 2-methyl-4-amino-5-hydroxymethyl pyrimidine pyrophosphate (HMP-PP) to form thiamine monophosphate (TMP). The polypeptide is Thiamine-phosphate synthase (Arthrobacter sp. (strain FB24)).